Consider the following 270-residue polypeptide: 3-phenylpropionate-dihydrodiol/cinnamic acid-dihydrodiol dehydrogenase (270 aa).

10–34 is an NAD(+) binding site; that stretch reads FITGGGSGLGLALVERFIEEGAQVA. Ser143 is a substrate binding site. The Proton acceptor role is filled by Tyr156.

It belongs to the short-chain dehydrogenases/reductases (SDR) family.

The catalysed reaction is 3-(cis-5,6-dihydroxycyclohexa-1,3-dien-1-yl)propanoate + NAD(+) = 3-(2,3-dihydroxyphenyl)propanoate + NADH + H(+). It carries out the reaction (2E)-3-(cis-5,6-dihydroxycyclohexa-1,3-dien-1-yl)prop-2-enoate + NAD(+) = (2E)-3-(2,3-dihydroxyphenyl)prop-2-enoate + NADH + H(+). The protein operates within aromatic compound metabolism; 3-phenylpropanoate degradation. Functionally, converts 3-phenylpropionate-dihydrodiol (PP-dihydrodiol) and cinnamic acid-dihydrodiol (CI-dihydrodiol) into 3-(2,3-dihydroxylphenyl)propanoic acid (DHPP) and 2,3-dihydroxicinnamic acid (DHCI), respectively. The sequence is that of 3-phenylpropionate-dihydrodiol/cinnamic acid-dihydrodiol dehydrogenase from Escherichia coli O7:K1 (strain IAI39 / ExPEC).